Reading from the N-terminus, the 751-residue chain is Collagen alpha-1(XIII) chain (751 aa).

The segment at 1 to 24 is disordered; that stretch reads MVAERTRKAAASGSRGPGELGAPG. Residues 1–40 lie on the Cytoplasmic side of the membrane; it reads MVAERTRKAAASGSRGPGELGAPGPGTVALAEQCARLPSP. A nonhelical region 1 (NC1) region spans residues 1–119; it reads MVAERTRKAA…KMSPGCNCPP (119 aa). Residues 15 to 24 show a composition bias toward gly residues; sequence RGPGELGAPG. Residues 41–59 traverse the membrane as a helical; Signal-anchor for type II membrane protein segment; it reads GCCGLLALALCSLALSLLA. The Extracellular portion of the chain corresponds to 60-751; that stretch reads HFRTAELQAR…GLPVQGCWNK (692 aa). Disordered regions lie at residues 108 to 127, 190 to 225, and 265 to 449; these read APKM…PTGR, PGHP…EYPH, and TFQG…EMVD. Residues 116–125 show a composition bias toward pro residues; sequence NCPPGPPGPT. The triple-helical region 1 (COL1) stretch occupies residues 120-223; sequence GPPGPTGRPG…KGEKGQCGEY (104 aa). Residues 204 to 213 show a composition bias toward low complexity; it reads PRGQPGPQGQ. The span at 214-225 shows a compositional bias: basic and acidic residues; that stretch reads KGEKGQCGEYPH. Residues 224 to 273 are nonhelical region 2 (NC2); the sequence is PHREYPGGMLAALRSNPIMSLKLLPLLNSVRLAPPPVIKRRTFQGEQSQT. Residues 274–445 form a triple-helical region 2 (COL2) region; sequence GIQGPPGPPG…KGAKGEPGKG (172 aa). Pro residues-rich tracts occupy residues 278–288, 296–312, and 391–402; these read PPGPPGPPGPS, LPGP…PGPK, and PGPPGLPGPPGP. Low complexity predominate over residues 403–436; sequence KGEAGVDGQAGPPGQQGDKGQPGAAGEQGPSGPK. Over residues 438 to 447 the composition is skewed to basic and acidic residues; that stretch reads AKGEPGKGEM. The tract at residues 446 to 467 is nonhelical region 3 (NC3); sequence EMVDYNGSINEALQEIRTLALM. Asn-451 carries an N-linked (GlcNAc...) asparagine glycan. The disordered stretch occupies residues 466–751; it reads LMGPPGLPGQ…GLPVQGCWNK (286 aa). The segment at 468 to 733 is triple-helical region 3 (COL3); the sequence is GPPGLPGQTG…KGDQGAPGLD (266 aa). Residues 470–484 are compositionally biased toward pro residues; sequence PGLPGQTGPPGPPGT. 3 stretches are compositionally biased toward basic and acidic residues: residues 499–509, 557–568, and 586–596; these read HDGDKGPRGKP, TGEKGEPGDEGR, and EKGEAGEKGDP. A compositionally biased stretch (pro residues) spans 601–613; it reads PGPPGPEGPPGPP. The span at 615–628 shows a compositional bias: low complexity; the sequence is LQGFPGPKGEAGLE. A compositionally biased stretch (basic and acidic residues) spans 630-643; it reads SKGEKGSQGEKGDR. Residues 658-673 show a composition bias toward pro residues; it reads PGPPGTPGPIGVPGPA. Residues 684-699 show a composition bias toward low complexity; it reads DPGMTGPTGAAGLPGL. Basic and acidic residues predominate over residues 706–726; that stretch reads KGNRGERGKKGSRGPKGDKGD. A nonhelical region 4 (NC4) region spans residues 734–751; the sequence is APCPLGEDGLPVQGCWNK.

Homotrimer; disulfide-linked. Nucleation of the type XIII collagen triple helix is likely to occur at the N-terminal region with triple helix formation proceeding from the N- to the C-terminus. Interacts with FN1, perlecan/HSPG2 and NID2.

The protein resides in the cell membrane. The protein localises to the postsynaptic cell membrane. Functionally, involved in cell-matrix and cell-cell adhesion interactions that are required for normal development. May participate in the linkage between muscle fiber and basement membrane. May play a role in endochondral ossification of bone and branching morphogenesis of lung. Binds heparin. At neuromuscular junctions, may play a role in acetylcholine receptor clustering. The protein is Collagen alpha-1(XIII) chain of Mus musculus (Mouse).